We begin with the raw amino-acid sequence, 330 residues long: Lipoyl synthase (330 aa).

Residues Cys77, Cys82, Cys88, Cys103, Cys107, Cys110, and Ser317 each coordinate [4Fe-4S] cluster. The region spanning 89 to 306 is the Radical SAM core domain; sequence FNHGTATFMI…RSEAERMGFE (218 aa).

The protein belongs to the radical SAM superfamily. Lipoyl synthase family. It depends on [4Fe-4S] cluster as a cofactor.

It localises to the cytoplasm. The catalysed reaction is [[Fe-S] cluster scaffold protein carrying a second [4Fe-4S](2+) cluster] + N(6)-octanoyl-L-lysyl-[protein] + 2 oxidized [2Fe-2S]-[ferredoxin] + 2 S-adenosyl-L-methionine + 4 H(+) = [[Fe-S] cluster scaffold protein] + N(6)-[(R)-dihydrolipoyl]-L-lysyl-[protein] + 4 Fe(3+) + 2 hydrogen sulfide + 2 5'-deoxyadenosine + 2 L-methionine + 2 reduced [2Fe-2S]-[ferredoxin]. The protein operates within protein modification; protein lipoylation via endogenous pathway; protein N(6)-(lipoyl)lysine from octanoyl-[acyl-carrier-protein]: step 2/2. Its function is as follows. Catalyzes the radical-mediated insertion of two sulfur atoms into the C-6 and C-8 positions of the octanoyl moiety bound to the lipoyl domains of lipoate-dependent enzymes, thereby converting the octanoylated domains into lipoylated derivatives. In Actinobacillus pleuropneumoniae serotype 3 (strain JL03), this protein is Lipoyl synthase.